A 363-amino-acid chain; its full sequence is Protein-glutamate methylesterase/protein-glutamine glutaminase 2 (363 aa).

The region spanning Arg-7–Glu-124 is the Response regulatory domain. Residue Asp-58 is modified to 4-aspartylphosphate. Positions Pro-160–Gln-357 constitute a CheB-type methylesterase domain. Catalysis depends on residues Ser-176, His-203, and Asp-299.

This sequence belongs to the CheB family. In terms of processing, phosphorylated by CheA. Phosphorylation of the N-terminal regulatory domain activates the methylesterase activity.

Its subcellular location is the cytoplasm. The enzyme catalyses [protein]-L-glutamate 5-O-methyl ester + H2O = L-glutamyl-[protein] + methanol + H(+). The catalysed reaction is L-glutaminyl-[protein] + H2O = L-glutamyl-[protein] + NH4(+). Functionally, involved in chemotaxis. Part of a chemotaxis signal transduction system that modulates chemotaxis in response to various stimuli. Catalyzes the demethylation of specific methylglutamate residues introduced into the chemoreceptors (methyl-accepting chemotaxis proteins or MCP) by CheR. Also mediates the irreversible deamidation of specific glutamine residues to glutamic acid. This Koribacter versatilis (strain Ellin345) protein is Protein-glutamate methylesterase/protein-glutamine glutaminase 2.